The primary structure comprises 282 residues: Bis(5'-nucleosyl)-tetraphosphatase, symmetrical (282 aa).

Belongs to the Ap4A hydrolase family.

It catalyses the reaction P(1),P(4)-bis(5'-adenosyl) tetraphosphate + H2O = 2 ADP + 2 H(+). In terms of biological role, hydrolyzes diadenosine 5',5'''-P1,P4-tetraphosphate to yield ADP. The polypeptide is Bis(5'-nucleosyl)-tetraphosphatase, symmetrical (Burkholderia mallei (strain NCTC 10247)).